A 319-amino-acid polypeptide reads, in one-letter code: Ferrochelatase (319 aa).

Positions 193 and 274 each coordinate Fe cation.

The protein belongs to the ferrochelatase family.

The protein resides in the cytoplasm. It catalyses the reaction heme b + 2 H(+) = protoporphyrin IX + Fe(2+). It participates in porphyrin-containing compound metabolism; protoheme biosynthesis; protoheme from protoporphyrin-IX: step 1/1. Catalyzes the ferrous insertion into protoporphyrin IX. In Actinobacillus pleuropneumoniae serotype 5b (strain L20), this protein is Ferrochelatase.